The primary structure comprises 245 residues: Ribonuclease 3 (245 aa).

The RNase III domain maps to 17–146; that stretch reads FAKKMNELGF…FVGALYLDQG (130 aa). A Mg(2+)-binding site is contributed by E59. D63 is a catalytic residue. D132 and E135 together coordinate Mg(2+). The active site involves E135. One can recognise a DRBM domain in the interval 172–241; the sequence is DFKTQFQEYV…AESAYSKLKS (70 aa). A disordered region spans residues 217 to 245; that stretch reads ATGQGKTKKESEQKAAESAYSKLKSNNNL.

Belongs to the ribonuclease III family. In terms of assembly, homodimer. Mg(2+) is required as a cofactor.

The protein resides in the cytoplasm. It carries out the reaction Endonucleolytic cleavage to 5'-phosphomonoester.. In terms of biological role, digests double-stranded RNA. Involved in the processing of primary rRNA transcript to yield the immediate precursors to the large and small rRNAs (23S and 16S). Processes some mRNAs, and tRNAs when they are encoded in the rRNA operon. Processes pre-crRNA and tracrRNA of type II CRISPR loci if present in the organism. The polypeptide is Ribonuclease 3 (Staphylococcus haemolyticus (strain JCSC1435)).